The following is a 69-amino-acid chain: MVTVTVDKNENLEKALKRFKRMIEKEAIIREWKRREYYEKPSTIRVKKEKAFKRKQAKKVRKLKQKTNR.

Positions 50–69 (KAFKRKQAKKVRKLKQKTNR) are disordered.

Belongs to the bacterial ribosomal protein bS21 family.

The chain is Small ribosomal subunit protein bS21 from Borrelia garinii subsp. bavariensis (strain ATCC BAA-2496 / DSM 23469 / PBi) (Borreliella bavariensis).